We begin with the raw amino-acid sequence, 76 residues long: Conotoxin VnMEKL-012 (76 aa).

Residues M1–A18 form the signal peptide. Residues L19–A42 constitute a propeptide that is removed on maturation. 3 cysteine pairs are disulfide-bonded: C49-C65, C56-C70, and C64-C74.

It belongs to the conotoxin O2 superfamily. As to expression, expressed by the venom duct.

It localises to the secreted. In Conus ventricosus (Mediterranean cone), this protein is Conotoxin VnMEKL-012.